Here is a 258-residue protein sequence, read N- to C-terminus: Imidazole glycerol phosphate synthase subunit HisF (258 aa).

Catalysis depends on residues D11 and D130.

The protein belongs to the HisA/HisF family. As to quaternary structure, heterodimer of HisH and HisF.

The protein resides in the cytoplasm. The enzyme catalyses 5-[(5-phospho-1-deoxy-D-ribulos-1-ylimino)methylamino]-1-(5-phospho-beta-D-ribosyl)imidazole-4-carboxamide + L-glutamine = D-erythro-1-(imidazol-4-yl)glycerol 3-phosphate + 5-amino-1-(5-phospho-beta-D-ribosyl)imidazole-4-carboxamide + L-glutamate + H(+). The protein operates within amino-acid biosynthesis; L-histidine biosynthesis; L-histidine from 5-phospho-alpha-D-ribose 1-diphosphate: step 5/9. In terms of biological role, IGPS catalyzes the conversion of PRFAR and glutamine to IGP, AICAR and glutamate. The HisF subunit catalyzes the cyclization activity that produces IGP and AICAR from PRFAR using the ammonia provided by the HisH subunit. The protein is Imidazole glycerol phosphate synthase subunit HisF of Haemophilus influenzae (strain PittEE).